We begin with the raw amino-acid sequence, 952 residues long: Pentatricopeptide repeat-containing protein At5g04810, chloroplastic (952 aa).

The transit peptide at M1–G60 directs the protein to the chloroplast. Disordered stretches follow at residues S30–L95 and L115–Q163. The segment covering Q37–P49 has biased composition (pro residues). Positions S58–P68 are enriched in low complexity. Positions S122–V133 are enriched in pro residues. Residues T137 to Q163 are compositionally biased toward basic and acidic residues. An RRM domain is found at I167–V238. The segment covering E259–R280 has biased composition (basic and acidic residues). The tract at residues E259–K281 is disordered. PPR repeat units lie at residues S308–P342, T343–M377, S378–L412, N413–A447, P448–P482, T483–H517, N518–P552, D553–P587, T588–P622, T623–A657, N658–V692, D693–R727, N728–P762, D763–P797, and N798–P832. Residues D918 to K952 form a disordered region. Acidic residues predominate over residues S921–V941.

It belongs to the PPR family. P subfamily.

Its subcellular location is the plastid. It localises to the chloroplast. May play a role in the plastid ribosome biogenesis. The protein is Pentatricopeptide repeat-containing protein At5g04810, chloroplastic (PPR4) of Arabidopsis thaliana (Mouse-ear cress).